The primary structure comprises 37 residues: Photosystem II reaction center protein K (37 aa).

Over K1 to V15 the chain is Lumenal. The helical transmembrane segment at L16–V30 threads the bilayer. Topologically, residues Q31–R37 are cytoplasmic.

This sequence belongs to the PsbK family. As to quaternary structure, PSII is composed of 1 copy each of membrane proteins PsbA, PsbB, PsbC, PsbD, PsbE, PsbF, PsbH, PsbI, PsbJ, PsbK, PsbL, PsbM, PsbT, PsbX, PsbY, PsbZ, Psb30/Ycf12, peripheral proteins PsbO, CyanoQ (PsbQ), PsbU, PsbV and a large number of cofactors. It forms dimeric complexes. PSII binds multiple chlorophylls, carotenoids and specific lipids. serves as cofactor.

It localises to the cellular thylakoid membrane. Its function is as follows. One of the components of the core complex of photosystem II (PSII). PSII is a light-driven water:plastoquinone oxidoreductase that uses light energy to abstract electrons from H(2)O, generating O(2) and a proton gradient subsequently used for ATP formation. It consists of a core antenna complex that captures photons, and an electron transfer chain that converts photonic excitation into a charge separation. The chain is Photosystem II reaction center protein K from Thermostichus vulcanus (Synechococcus vulcanus).